We begin with the raw amino-acid sequence, 250 residues long: Small ribosomal subunit protein uS2 (250 aa).

It belongs to the universal ribosomal protein uS2 family.

The polypeptide is Small ribosomal subunit protein uS2 (Variovorax paradoxus (strain S110)).